The primary structure comprises 337 residues: uncharacterized protein (337 aa).

Residues Met1–Gly11 show a composition bias toward acidic residues. The interval Met1 to Arg20 is disordered. An N-acetylserine modification is found at Ser2. A coiled-coil region spans residues Ala50–Gly130. Positions Leu139 to Ser242 are disordered. A compositionally biased stretch (low complexity) spans Ser170 to Glu182. The segment covering Leu197–Arg211 has biased composition (polar residues). Thr213 bears the Phosphothreonine mark. Ser217 bears the Phosphoserine mark. Polar residues predominate over residues Ala223 to Pro233. Thr226 carries the phosphothreonine modification. Ser235 bears the Phosphoserine mark.

This is an uncharacterized protein from Arabidopsis thaliana (Mouse-ear cress).